Consider the following 197-residue polypeptide: Holliday junction branch migration complex subunit RuvA (197 aa).

Positions Met-1–Leu-64 are domain I. The interval Thr-65–Gly-143 is domain II. The interval Lys-144–Leu-152 is flexible linker. The domain III stretch occupies residues Leu-152–Ile-197.

The protein belongs to the RuvA family. In terms of assembly, homotetramer. Forms an RuvA(8)-RuvB(12)-Holliday junction (HJ) complex. HJ DNA is sandwiched between 2 RuvA tetramers; dsDNA enters through RuvA and exits via RuvB. An RuvB hexamer assembles on each DNA strand where it exits the tetramer. Each RuvB hexamer is contacted by two RuvA subunits (via domain III) on 2 adjacent RuvB subunits; this complex drives branch migration. In the full resolvosome a probable DNA-RuvA(4)-RuvB(12)-RuvC(2) complex forms which resolves the HJ.

It localises to the cytoplasm. Functionally, the RuvA-RuvB-RuvC complex processes Holliday junction (HJ) DNA during genetic recombination and DNA repair, while the RuvA-RuvB complex plays an important role in the rescue of blocked DNA replication forks via replication fork reversal (RFR). RuvA specifically binds to HJ cruciform DNA, conferring on it an open structure. The RuvB hexamer acts as an ATP-dependent pump, pulling dsDNA into and through the RuvAB complex. HJ branch migration allows RuvC to scan DNA until it finds its consensus sequence, where it cleaves and resolves the cruciform DNA. This is Holliday junction branch migration complex subunit RuvA from Caldicellulosiruptor bescii (strain ATCC BAA-1888 / DSM 6725 / KCTC 15123 / Z-1320) (Anaerocellum thermophilum).